A 741-amino-acid polypeptide reads, in one-letter code: Polycomb protein Suz12 (741 aa).

Residues 1 to 21 are disordered; it reads MAPQKHGGGGGGGSGPSAGSG. Serine 20 bears the Phosphoserine mark. Glycyl lysine isopeptide (Lys-Gly) (interchain with G-Cter in SUMO) cross-links involve residues lysine 74 and lysine 75. Lysine 77 participates in a covalent cross-link: Glycyl lysine isopeptide (Lys-Gly) (interchain with G-Cter in SUMO); alternate. Lysine 77 is covalently cross-linked (Glycyl lysine isopeptide (Lys-Gly) (interchain with G-Cter in SUMO2); alternate). The interval 81 to 108 is interaction with JARID2 and EPOP; the sequence is VQADHELFLQAFEKPTQIYRFLRTRNLI. The interaction with AEBP2 and PHF19 stretch occupies residues 148-365; it reads GEQESHSLSA…TLQFTLRWTG (218 aa). Glycyl lysine isopeptide (Lys-Gly) (interchain with G-Cter in SUMO2) cross-links involve residues lysine 225 and lysine 392. The C2H2-type zinc finger occupies 450–473; sequence LHCPWCTLNCRKLYSLLKHLKLCH. 3 positions are modified to phosphoserine: serine 543, serine 548, and serine 585. A VEFS-box region spans residues 565-641; the sequence is RLYFHSDTCL…NQMNHACMLF (77 aa). The disordered stretch occupies residues 689–741; sequence KLEKGESATPSNEEIAEEQNGTANGFSETNSKEKALETDGVSGVPKQSKKQKL. Polar residues predominate over residues 707-717; it reads QNGTANGFSET.

Belongs to the VEFS (VRN2-EMF2-FIS2-SU(Z)12) family. Component of the PRC2 complex, which consists of the core subunits EED, EZH1 or EZH2, SUZ12, and RBBP4, and various combinations of accessory subunits including AEBP2, JARID2, PHF19, MTF2 and EPOP. Within the complex, interacts (via C2H2 zinc finger domain) with JARID2 and EPOP; JARID2 and EPOP compete for SUZ12 binding. Also interacts with AEBP2 and PHF19. Forms a monomeric PRC2.2 (class 2) complex consisting of at least SUZ12, RBBP4, AEBP2 and JARID2. Forms a dimeric PRC2.1 (class 1, PRC-PCL) complex consisting of at least SUZ12, RBBP4, and PHF19 or MTF2; PHF19 and MTF2 stabilize the dimeric structure which enhances PRC2 interaction with chromatin. The minimum components required for methyltransferase activity of the PRC2/EZH2 complex are EED, EZH2 and SUZ12. The PRC2 complex may also interact with DNMT1, DNMT3A, DNMT3B and PHF1 via the EZH2 subunit and with SIRT1 via the SUZ12 subunit. Interacts with WDR77. Interacts with histone H1. Interacts with CDYL. Interacts with BMAL1. Interacts with EZHIP (via C-terminal region). Interacts with ARMC12. Interacts with DDX18; this interaction inhibits the PRC2 complex. Post-translationally, sumoylated, probably by PIAS2. In terms of tissue distribution, expressed in embryonic stem cells.

It localises to the nucleus. Its subcellular location is the chromosome. In terms of biological role, polycomb group (PcG) protein. Component of the PRC2/EED-EZH2 complex, which methylates 'Lys-9' (H3K9me) and 'Lys-27' (H3K27me) of histone H3, leading to transcriptional repression of the affected target gene. The PRC2/EED-EZH2 complex may also serve as a recruiting platform for DNA methyltransferases, thereby linking two epigenetic repression systems. Genes repressed by the PRC2/EED-EZH2 complex include HOXA7, HOXB6 and HOXC8. The protein is Polycomb protein Suz12 (Suz12) of Mus musculus (Mouse).